The following is a 918-amino-acid chain: MKTIKKTLLAAAIASFFSSGLYAQTPIDLGVVNEDKLIEMLVRTGQIPADASDVDKRIALERYLEEKIRSGFKGDAQFGKKALEQRAKILKVIDKQKGPHKARVFALDVGQKRTDKVLALLIDFPDLPWDDNRLTKEHTEMLYDRYEPSHYQDLLFSDKGYTGPNGENFISMRQYYESESGNSYSVSGQAAGWYRASKNAAYYGGNSPGTNNDMNARELVREALDQLARDPNINLADYDIEDRYDYNGNGNFREPDGVIDHLMIFHASVGEEAGGGVLGADAIWSHRFNLGRYHVLEGTKSNVPGRFNGQFAAFDYTIQPIDAAAGVCAHEYGHDLGLPDEYDTQYTGTGEPVSYWSIMSSGSWAGKIGGTQPTAFSSWAKQFLQNSIGGRWINHEQLSINELEAKPRVVTLFQTTDNSRPNMVKVTLPMKRVEGIKPAEGEFSFYSNRGDDLKNRMSRPLTIPAGSQATLRFKAWFQIEKDYDYARVLINGKPIAGNITTMDDPFKSGLVPAISGQSDGWVDAQFDLSAWAGQTVELAFDYLTDGGLAMEGLYVDDLRLEVDGNQTLIDNAEGTSSFAFQGFTKNGGFHEANHYYLLQWRSHNDVDQGLANLKRFGQLMSFEPGLLVWYVDESYADNWVGKHPGEGWLGVVDADQNALVWSKTGEVAQTRFQVRDATFSLFDQAPLKLVTADGNTLEDMNLTANASFSDDQDYSSPQAPDSGRKVMPFGLKIDLLSQSKENEYGVVRLSKVTTENIAPVARFELKVEGLSVMSQNTSSDSDGNIVSYLWDFGNGQTSTEAAPTWSYTKAGSYSVTLTVTDDKGDSDTHQQTIKVDTPNALPQASANYIHLGRWVTMWSTSTDSDGRIVDTEWTLPNGKIKRGRMFTAIFPSYGHHDVQLKVMDDRGAVTTITIKVKL.

The N-terminal stretch at 1–23 (MKTIKKTLLAAAIASFFSSGLYA) is a signal peptide. The propeptide occupies 24–105 (QTPIDLGVVN…QKGPHKARVF (82 aa)). His-330 is a Zn(2+) binding site. Glu-331 is a catalytic residue. His-334 is a binding site for Zn(2+). Ca(2+) contacts are provided by Ile-757, Asp-782, Asp-821, and Asp-825. PKD domains are found at residues 758-835 (APVA…TIKV) and 855-918 (VTMW…KVKL). Residues 835–918 (VDTPNALPQA…VTTITIKVKL (84 aa)) constitute a propeptide that is removed on maturation.

This sequence belongs to the peptidase M6 family. Zn(2+) serves as cofactor. In terms of processing, prtV is expressed as an inactive, multidomain, 102 kDa pre-pro-metalloprotease. To form a catalytically active protease, PrtV is first secreted, and then it undergoes N- and C-terminal cleavages during envelope translocation to yield a 81 kDa pro-metalloprotease. Outside the cell, the 81 kDa pro-metalloprotease undergoes an auto-cleavage. The two major products of autoproteolysis (37 kDa and 18 kDa) together form the so called 55 kDa active complex.

The protein localises to the secreted. Its activity is regulated as follows. Calcium plays an important structural role, providing stability to this protein in the cytoplasm. Outside the cell, the decrease of the calcium concentration triggers the autoproteolysis. PrtV activity is increased by 25 mM of Sr(2+) or Mg(2+) and to some extent by Ba(2+); however, Ba(2+) inhibits PrtV at higher concentrations. Completely inhibited by EDTA and 1,10-phenanthroline. Metalloprotease that exhibits a cytotoxic effect leading to cell death. In host tissues, it could play a role in pathogenesis by modulating the stability of the extracellular matrix components such as fibronectin and fibrinogen. Also able to cleave plasminogen. This Vibrio cholerae serotype O1 (strain ATCC 39315 / El Tor Inaba N16961) protein is Pre-pro-metalloprotease PrtV.